Reading from the N-terminus, the 419-residue chain is 3-isopropylmalate dehydratase large subunit (419 aa).

[4Fe-4S] cluster-binding residues include Cys-300, Cys-360, and Cys-363.

It belongs to the aconitase/IPM isomerase family. LeuC type 2 subfamily. As to quaternary structure, heterodimer of LeuC and LeuD. The cofactor is [4Fe-4S] cluster.

The catalysed reaction is (2R,3S)-3-isopropylmalate = (2S)-2-isopropylmalate. Its pathway is amino-acid biosynthesis; L-leucine biosynthesis; L-leucine from 3-methyl-2-oxobutanoate: step 2/4. Catalyzes the isomerization between 2-isopropylmalate and 3-isopropylmalate, via the formation of 2-isopropylmaleate. This chain is 3-isopropylmalate dehydratase large subunit, found in Clostridium beijerinckii (strain ATCC 51743 / NCIMB 8052) (Clostridium acetobutylicum).